Here is a 251-residue protein sequence, read N- to C-terminus: Hydroxyacylglutathione hydrolase (251 aa).

Zn(2+) is bound by residues H53, H55, D57, H58, H110, D127, and H165.

This sequence belongs to the metallo-beta-lactamase superfamily. Glyoxalase II family. Monomer. The cofactor is Zn(2+).

It carries out the reaction an S-(2-hydroxyacyl)glutathione + H2O = a 2-hydroxy carboxylate + glutathione + H(+). It functions in the pathway secondary metabolite metabolism; methylglyoxal degradation; (R)-lactate from methylglyoxal: step 2/2. In terms of biological role, thiolesterase that catalyzes the hydrolysis of S-D-lactoyl-glutathione to form glutathione and D-lactic acid. The sequence is that of Hydroxyacylglutathione hydrolase from Salmonella agona (strain SL483).